We begin with the raw amino-acid sequence, 91 residues long: Small ribosomal subunit protein uS19 (91 aa).

It belongs to the universal ribosomal protein uS19 family.

In terms of biological role, protein S19 forms a complex with S13 that binds strongly to the 16S ribosomal RNA. In Lactobacillus delbrueckii subsp. bulgaricus (strain ATCC 11842 / DSM 20081 / BCRC 10696 / JCM 1002 / NBRC 13953 / NCIMB 11778 / NCTC 12712 / WDCM 00102 / Lb 14), this protein is Small ribosomal subunit protein uS19.